The chain runs to 1349 residues: Nitric oxide synthase (1349 aa).

Positions 23-195 (AQQQQQQQQQ…QPRKMSQDYR (173 aa)) are disordered. Composition is skewed to low complexity over residues 24 to 51 (QQQQ…TQQQ) and 64 to 73 (LNGNGLLSGN). Over residues 142 to 159 (SGSGSGSGGGGVGVGQGA) the composition is skewed to gly residues. The span at 165–189 (GSCTASGKSSRELSPSPKNQQQPRK) shows a compositional bias: polar residues. Serine 250 is a (6R)-L-erythro-5,6,7,8-tetrahydrobiopterin binding site. Cysteine 328 contributes to the heme b binding site. L-arginine is bound by residues glutamine 391, tryptophan 500, tyrosine 501, glutamate 505, and asparagine 510. Positions 591 and 604 each coordinate (6R)-L-erythro-5,6,7,8-tetrahydrobiopterin. Residue tyrosine 619 coordinates heme b. The interval 641–661 (PRRKFNFKQIARAVKFTSKLF) is calmodulin-binding. The region spanning 671 to 868 (ATVLYATETG…SFRKWAPEVF (198 aa)) is the Flavodoxin-like domain. 814 to 845 (VFALGSSAYPNFCAFGQYVDNILGELGGERLL) contributes to the FMN binding site. An FAD-binding FR-type domain is found at 928–1167 (AKAKPHNLTR…VRSALGFHLP (240 aa)). Residues 957-968 (YEPGDHVGIFPA) and 1100-1110 (LQPRFYSISSS) contribute to the FAD site. Residues 1175-1193 (ILIG…WQEF) and 1273-1287 (GHIY…AEHV) contribute to the NADP(+) site.

This sequence belongs to the NOS family. The cofactor is heme b. It depends on FAD as a cofactor. FMN is required as a cofactor.

The catalysed reaction is 2 L-arginine + 3 NADPH + 4 O2 + H(+) = 2 L-citrulline + 2 nitric oxide + 3 NADP(+) + 4 H2O. Its activity is regulated as follows. Stimulated by calcium/calmodulin. Functionally, catalyzes the conversion of L-arginine to L-citrulline producing nitric oxide (NO) which is a messenger molecule with diverse functions throughout the body. Truncated isoforms (isoform 3-isoform 6) are able to form intracellular complexes with the full-length protein and serve as dominant negative inhibitors of the enzyme activity. The sequence is that of Nitric oxide synthase (Nos) from Drosophila melanogaster (Fruit fly).